The sequence spans 680 residues: NADPH--cytochrome P450 reductase (680 aa).

At M1–K5 the chain is on the lumenal side. The helical transmembrane segment at L6–A23 threads the bilayer. Residues K24–W680 are Cytoplasmic-facing. In terms of domain architecture, Flavodoxin-like spans T60–F204. Residues S66–A71, A117–G120, L152–N161, and D187 contribute to the FMN site. The FAD-binding FR-type domain maps to T264 to F509. Position 283 (R283) interacts with NADP(+). Residues R439–S442, T457–V459, and G473–T476 contribute to the FAD site. NADP(+) contacts are provided by residues T537, S599–R600, K606–Q610, and D642. An FAD-binding site is contributed by W680.

It belongs to the NADPH--cytochrome P450 reductase family. In the N-terminal section; belongs to the flavodoxin family. The protein in the C-terminal section; belongs to the flavoprotein pyridine nucleotide cytochrome reductase family. The cofactor is FAD. FMN is required as a cofactor.

Its subcellular location is the endoplasmic reticulum membrane. It localises to the mitochondrion outer membrane. The protein localises to the cell membrane. It catalyses the reaction 2 oxidized [cytochrome P450] + NADPH = 2 reduced [cytochrome P450] + NADP(+) + H(+). This enzyme is required for electron transfer from NADP to cytochrome P450 in microsomes. It can also provide electron transfer to heme oxygenase and cytochrome B5. Involved in ergosterol biosynthesis. The sequence is that of NADPH--cytochrome P450 reductase from Candida maltosa (Yeast).